The chain runs to 97 residues: Co-chaperonin GroES (97 aa).

This sequence belongs to the GroES chaperonin family. Heptamer of 7 subunits arranged in a ring. Interacts with the chaperonin GroEL.

It localises to the cytoplasm. Functionally, together with the chaperonin GroEL, plays an essential role in assisting protein folding. The GroEL-GroES system forms a nano-cage that allows encapsulation of the non-native substrate proteins and provides a physical environment optimized to promote and accelerate protein folding. GroES binds to the apical surface of the GroEL ring, thereby capping the opening of the GroEL channel. In Elusimicrobium minutum (strain Pei191), this protein is Co-chaperonin GroES.